The sequence spans 36 residues: DFPLSKEYETCVRPRKCQPPLKCNKAQICVDPKKGW.

2 disulfide bridges follow: cysteine 11-cysteine 23 and cysteine 17-cysteine 29.

In terms of tissue distribution, expressed by the venom gland.

It is found in the secreted. Affects the activity of both ryanodine-sensitive calcium-release channels RyR1 and RyR2 with high potency. At lower concentrations the toxin increases full openings of the RyRs, and at higher concentrations it inhibits full openings and induce openings to subconductance levels and reduces the number of full conductance openings. The different actions may be attributed to the toxins binding at different sites on the RyRs, with binding at a high-affinity site mediating the increase in full openings and the induction of subconductance states evoked upon binding to a lower-affinity site. Shows insect lethality against crickets and common cutworms (only shows paralysis against cockroaches), but no toxicity is observed in mice. The polypeptide is Insecticidal toxin LaIT1 (Liocheles australasiae (Dwarf wood scorpion)).